The chain runs to 893 residues: Nitrate reductase [NADPH] (893 aa).

The segment at Met1–Arg83 is disordered. The span at Pro55–Pro65 shows a compositional bias: pro residues. The span at Asp71–Arg83 shows a compositional bias: basic and acidic residues. Cys170 serves as a coordination point for Mo-molybdopterin. Residues Asn536–Ser611 enclose the Cytochrome b5 heme-binding domain. Positions 571 and 594 each coordinate heme. The FAD-binding FR-type domain maps to Arg641 to Leu752. FAD is bound by residues Arg695–Thr698, Leu712–Tyr716, Lys726–Thr728, Ser776, and Thr779. Residue Leu863–Leu872 coordinates NADP(+).

The protein belongs to the nitrate reductase family. As to quaternary structure, homodimer. FAD serves as cofactor. Heme is required as a cofactor. The cofactor is Mo-molybdopterin.

It carries out the reaction nitrite + NADP(+) + H2O = nitrate + NADPH + H(+). Its function is as follows. Nitrate reductase is a key enzyme involved in the first step of nitrate assimilation in plants, fungi and bacteria. The polypeptide is Nitrate reductase [NADPH] (NIAD) (Leptosphaeria maculans (Blackleg fungus)).